The following is a 420-amino-acid chain: Disease resistance protein CHS1 (420 aa).

One can recognise a TIR domain in the interval 12 to 167 (RELDVFLSFS…QIADDIRLMF (156 aa)). Residue Glu-86 is part of the active site. The region spanning 185 to 406 (MKALYALLAL…KDIKEVWKIM (222 aa)) is the NB-ARC domain.

As to expression, mostly expressed in leaves and flowers (mainly in sepals), and, at a lower intensity, in stems. Present at low levels in roots and seeds.

Its subcellular location is the cytoplasm. It localises to the nucleus. It catalyses the reaction NAD(+) + H2O = ADP-D-ribose + nicotinamide + H(+). Its function is as follows. Confers resistance to low temperatures by limiting chloroplast damage and cell death, thus maintaining growth homeostasis. Regulates steryl-esters and sterols accumulation. Limits leaf necrosis associated with virulent bacterial infection (e.g. Pseudomonas syringae pv. tomato DC3000). The polypeptide is Disease resistance protein CHS1 (Arabidopsis thaliana (Mouse-ear cress)).